The chain runs to 2463 residues: Protein TIC 214 (2463 aa).

6 helical membrane passes run 18 to 38 (VGLYYGFISAFSIGSSYLFLL), 60 to 80 (FFTGQLLIFISILYGPLHLAL), 86 to 106 (ILLLLAPYFFFHYLFSNSGQW), 127 to 147 (LVFLNNLLFQLFSLSLLGRPM), 170 to 190 (FVGWLIGHILVLKWAGLVFVW), and 297 to 317 (LFSIILFAIFLLYLDQTPLLY). Positions 326–441 (QLQRKLSNET…AARAMQEAYK (116 aa)) form a coiled coil. Disordered regions lie at residues 792–841 (AVPK…RKVN), 1230–1249 (SIQKDPKKEKDPKKEKGPKK), 1393–1417 (SGGRETPEFTRSQKDIDNLKNEQDF), 2116–2136 (EEEKIEKEKRKKERKKEKLKK), and 2162–2187 (KQRAKNIARMEEEDKKARKKRKRKVQ). Positions 794–830 (PKKKKKISKSKQKNVKSKQKNVKSKQKNVKSKQKNVK) are enriched in basic residues. Basic and acidic residues-rich tracts occupy residues 832 to 841 (KQNEIKRKVN), 1231 to 1249 (IQKDPKKEKDPKKEKGPKK), and 1397 to 1417 (ETPEFTRSQKDIDNLKNEQDF). Residues 2049–2192 (WDALVASLKQ…KRKVQVQENK (144 aa)) are a coiled coil. The segment covering 2124–2136 (KRKKERKKEKLKK) has biased composition (basic residues).

Belongs to the TIC214 family. In terms of assembly, part of the Tic complex.

It is found in the plastid. Its subcellular location is the chloroplast inner membrane. Functionally, involved in protein precursor import into chloroplasts. May be part of an intermediate translocation complex acting as a protein-conducting channel at the inner envelope. The protein is Protein TIC 214 of Oenothera elata subsp. hookeri (Hooker's evening primrose).